Reading from the N-terminus, the 578-residue chain is Isocitrate dehydrogenase kinase/phosphatase (578 aa).

ATP contacts are provided by residues 315–321 (APGIRGM) and lysine 336. Aspartate 371 is a catalytic residue.

It belongs to the AceK family.

It is found in the cytoplasm. The enzyme catalyses L-seryl-[isocitrate dehydrogenase] + ATP = O-phospho-L-seryl-[isocitrate dehydrogenase] + ADP + H(+). Its function is as follows. Bifunctional enzyme which can phosphorylate or dephosphorylate isocitrate dehydrogenase (IDH) on a specific serine residue. This is a regulatory mechanism which enables bacteria to bypass the Krebs cycle via the glyoxylate shunt in response to the source of carbon. When bacteria are grown on glucose, IDH is fully active and unphosphorylated, but when grown on acetate or ethanol, the activity of IDH declines drastically concomitant with its phosphorylation. The chain is Isocitrate dehydrogenase kinase/phosphatase from Escherichia coli (strain K12 / MC4100 / BW2952).